The following is a 637-amino-acid chain: MGKVIGIDLGTTNSCVAVMDGKSPRVIENAEGMRTTPSIVALTDDDERLVGQPAKRQAVTNPEKTIFAVKRLIGRRYDDPTVAKDKDLVPYKIVKASNGDAWVEADGKIYSPSQISAFILQKMKETAEAHLGQKVDQAVITVPAYFNDAQRQATKDAGKIAGLEVLRIINEPTAAALAYGLDKAKQGTIAVYDLGGGTFDVSVLEIGDGVFEVKSTNGDTFLGGEDFDMRLVGYLADEFQKEQGINLRNDKLALQRLKEAAEKAKIELSSTTQTEINLPFITADASGPKHLTMKLTRAKFEALVDDLVQKTIEPCRKALKDAGLSAGEISEVVLVGGMTRMPKIQEVVKQFFGKEPHKGVNPDEVVAIGAAIQAGVLQGDVKDVLLLDVTPLSLGIETLGGVFTRIIERNTTIPTKKSQVFSTAEDNQNAVTIRVFQGEREMAADNKALGQFDLMGIPPAPRGMPQIEVTFDIDANGIVNVSAKDKATGKEQQIRIQASGGLSESEIEKMVKEAEANAAEDKKRREAVDAKNHADALVHSTEKALAEHGSKVGEGERKAIEDALADLKEALKGDDSEAIKAKSNTLAQASMKLGEAMYQQQAEGDAARDAAQDAAKDDVVDAEFTEVDDDKNDKKSA.

Threonine 198 is subject to Phosphothreonine; by autocatalysis. Residues 597–637 (MYQQQAEGDAARDAAQDAAKDDVVDAEFTEVDDDKNDKKSA) form a disordered region. Positions 605–619 (DAARDAAQDAAKDDV) are enriched in basic and acidic residues. Positions 620-630 (VDAEFTEVDDD) are enriched in acidic residues.

Belongs to the heat shock protein 70 family.

In terms of biological role, acts as a chaperone. In Afipia carboxidovorans (strain ATCC 49405 / DSM 1227 / KCTC 32145 / OM5) (Oligotropha carboxidovorans), this protein is Chaperone protein DnaK.